The primary structure comprises 597 residues: Formate--tetrahydrofolate ligase (597 aa).

Residue 84-91 (TPLGEGKS) coordinates ATP.

This sequence belongs to the formate--tetrahydrofolate ligase family.

The enzyme catalyses (6S)-5,6,7,8-tetrahydrofolate + formate + ATP = (6R)-10-formyltetrahydrofolate + ADP + phosphate. Its pathway is one-carbon metabolism; tetrahydrofolate interconversion. The protein is Formate--tetrahydrofolate ligase of Dehalococcoides mccartyi (strain CBDB1).